Consider the following 92-residue polypeptide: MELELRFFATFREVVGQKSIYWRVDDDATVGDVLRSLEAEYDGLAGRLIEDGEVKPHVNVLKNGREVVHLDGMATALDDGDAVSVFPPVAGG.

Residues Lys-18, Lys-55, and Lys-62 each participate in a glycyl lysine isopeptide (Lys-Gly) (interchain with G-Cter in SAMP3) cross-link. Residue Gly-92 is modified to Glycyl adenylate; alternate. Residue Gly-92 forms a Glycyl lysine isopeptide (Gly-Lys) (interchain with K-? in acceptor proteins); alternate linkage.

Monomer. The C-terminal glycine is likely acyl-adenylated (-COAMP) by UbaA.

Its function is as follows. Functions as a protein modifier covalently attached to lysine residues of substrate proteins. The protein modification process is termed sampylation and involves the formation of an isopeptide bond between the SAMP3 C-terminal glycine carboxylate and the epsilon-amino group of lysine residues on target proteins. Seems to be able to form polymeric chains with itself at Lys-18, Lys-55 and Lys-62, similar to ubiquitin and other ubiquitin-like proteins. SAMP3 appears not to serve as a proteolytic signal in the cell to target proteins for degradation by proteasomes. May regulate molybdenum cofactor (MoCo) biosynthesis by inhibiting the activity of MPT synthase MoaE under aerobic conditions, providing a hierarchy of oxygen use prior to that of alternative electron acceptors such as DMSO. This is Small archaeal modifier protein 3 (samp3) from Haloferax volcanii (strain ATCC 29605 / DSM 3757 / JCM 8879 / NBRC 14742 / NCIMB 2012 / VKM B-1768 / DS2) (Halobacterium volcanii).